A 155-amino-acid chain; its full sequence is Large-conductance mechanosensitive channel (155 aa).

The next 2 helical transmembrane spans lie at V25–L45 and G98–V118.

It belongs to the MscL family. In terms of assembly, homopentamer.

The protein localises to the cell inner membrane. Channel that opens in response to stretch forces in the membrane lipid bilayer. May participate in the regulation of osmotic pressure changes within the cell. In Novosphingobium aromaticivorans (strain ATCC 700278 / DSM 12444 / CCUG 56034 / CIP 105152 / NBRC 16084 / F199), this protein is Large-conductance mechanosensitive channel.